The sequence spans 601 residues: Elongation factor 4 (601 aa).

The region spanning 6-188 (KNIRNFSIIA…QIIKKIPAPD (183 aa)) is the tr-type G domain. GTP is bound by residues 18–23 (DHGKST) and 135–138 (NKID).

The protein belongs to the TRAFAC class translation factor GTPase superfamily. Classic translation factor GTPase family. LepA subfamily.

The protein resides in the cell membrane. The enzyme catalyses GTP + H2O = GDP + phosphate + H(+). Required for accurate and efficient protein synthesis under certain stress conditions. May act as a fidelity factor of the translation reaction, by catalyzing a one-codon backward translocation of tRNAs on improperly translocated ribosomes. Back-translocation proceeds from a post-translocation (POST) complex to a pre-translocation (PRE) complex, thus giving elongation factor G a second chance to translocate the tRNAs correctly. Binds to ribosomes in a GTP-dependent manner. This Buchnera aphidicola subsp. Schizaphis graminum (strain Sg) protein is Elongation factor 4.